Consider the following 182-residue polypeptide: Auxin-responsive protein IAA9 (182 aa).

Residues 1-41 are disordered; it reads MELELGLAPPNSGHLVVDELSSSSSSGGGSGSAPVSASSAG. The short motif at 3-7 is the EAR-like (transcriptional repression) element; sequence LELGL. Positions 32–41 are enriched in low complexity; it reads SAPVSASSAG. A PB1 domain is found at 92–182; sequence ANYVKVKKEG…RSVKRLKILG (91 aa).

This sequence belongs to the Aux/IAA family. In terms of assembly, homodimers and heterodimers. As to expression, expressed in etiolated shoots and flowers.

Its subcellular location is the nucleus. Functionally, aux/IAA proteins are short-lived transcriptional factors that function as repressors of early auxin response genes at low auxin concentrations. The sequence is that of Auxin-responsive protein IAA9 (IAA9) from Oryza sativa subsp. japonica (Rice).